A 197-amino-acid polypeptide reads, in one-letter code: Protein GrpE (197 aa).

Residues 1–40 (MSSKEQKTPEGQAPEEIIMDQHEEIEAVEPEASAEQVDPR) form a disordered region.

Belongs to the GrpE family. In terms of assembly, homodimer.

It localises to the cytoplasm. Functionally, participates actively in the response to hyperosmotic and heat shock by preventing the aggregation of stress-denatured proteins, in association with DnaK and GrpE. It is the nucleotide exchange factor for DnaK and may function as a thermosensor. Unfolded proteins bind initially to DnaJ; upon interaction with the DnaJ-bound protein, DnaK hydrolyzes its bound ATP, resulting in the formation of a stable complex. GrpE releases ADP from DnaK; ATP binding to DnaK triggers the release of the substrate protein, thus completing the reaction cycle. Several rounds of ATP-dependent interactions between DnaJ, DnaK and GrpE are required for fully efficient folding. The polypeptide is Protein GrpE (Escherichia coli (strain K12 / DH10B)).